Consider the following 371-residue polypeptide: 4-hydroxy-3-methylbut-2-en-1-yl diphosphate synthase (flavodoxin) (371 aa).

[4Fe-4S] cluster contacts are provided by cysteine 270, cysteine 273, cysteine 305, and glutamate 312.

The protein belongs to the IspG family. The cofactor is [4Fe-4S] cluster.

The enzyme catalyses (2E)-4-hydroxy-3-methylbut-2-enyl diphosphate + oxidized [flavodoxin] + H2O + 2 H(+) = 2-C-methyl-D-erythritol 2,4-cyclic diphosphate + reduced [flavodoxin]. The protein operates within isoprenoid biosynthesis; isopentenyl diphosphate biosynthesis via DXP pathway; isopentenyl diphosphate from 1-deoxy-D-xylulose 5-phosphate: step 5/6. Converts 2C-methyl-D-erythritol 2,4-cyclodiphosphate (ME-2,4cPP) into 1-hydroxy-2-methyl-2-(E)-butenyl 4-diphosphate. The chain is 4-hydroxy-3-methylbut-2-en-1-yl diphosphate synthase (flavodoxin) from Shewanella sp. (strain ANA-3).